The primary structure comprises 371 residues: N-acetyldiaminopimelate deacetylase (371 aa).

D68 is a catalytic residue. Catalysis depends on E127, which acts as the Proton acceptor.

It belongs to the peptidase M20A family. N-acetyldiaminopimelate deacetylase subfamily.

The enzyme catalyses N-acetyl-(2S,6S)-2,6-diaminopimelate + H2O = (2S,6S)-2,6-diaminopimelate + acetate. The protein operates within amino-acid biosynthesis; L-lysine biosynthesis via DAP pathway; LL-2,6-diaminopimelate from (S)-tetrahydrodipicolinate (acetylase route): step 3/3. Its function is as follows. Catalyzes the conversion of N-acetyl-diaminopimelate to diaminopimelate and acetate. This is N-acetyldiaminopimelate deacetylase from Listeria innocua serovar 6a (strain ATCC BAA-680 / CLIP 11262).